The chain runs to 645 residues: 1,4-alpha-glucan branching enzyme GlgB (645 aa).

The active-site Nucleophile is aspartate 309. The active-site Proton donor is the glutamate 352. The tract at residues 619–645 (VKTRKGSKKQDGSKTKVRSNVTSRGKR) is disordered. Residues 636–645 (RSNVTSRGKR) are compositionally biased toward polar residues.

Belongs to the glycosyl hydrolase 13 family. GlgB subfamily. Monomer.

It catalyses the reaction Transfers a segment of a (1-&gt;4)-alpha-D-glucan chain to a primary hydroxy group in a similar glucan chain.. It functions in the pathway glycan biosynthesis; glycogen biosynthesis. Its function is as follows. Catalyzes the formation of the alpha-1,6-glucosidic linkages in glycogen by scission of a 1,4-alpha-linked oligosaccharide from growing alpha-1,4-glucan chains and the subsequent attachment of the oligosaccharide to the alpha-1,6 position. This is 1,4-alpha-glucan branching enzyme GlgB from Bacillus cereus (strain Q1).